Here is a 309-residue protein sequence, read N- to C-terminus: Elongation factor Ts (309 aa).

The interval 82–85 (TDFV) is involved in Mg(2+) ion dislocation from EF-Tu.

It belongs to the EF-Ts family.

It is found in the cytoplasm. In terms of biological role, associates with the EF-Tu.GDP complex and induces the exchange of GDP to GTP. It remains bound to the aminoacyl-tRNA.EF-Tu.GTP complex up to the GTP hydrolysis stage on the ribosome. This chain is Elongation factor Ts, found in Rickettsia bellii (strain OSU 85-389).